Here is a 329-residue protein sequence, read N- to C-terminus: Ribosomal RNA small subunit methyltransferase C (329 aa).

The protein belongs to the methyltransferase superfamily. RsmC family. Monomer.

It localises to the cytoplasm. It catalyses the reaction guanosine(1207) in 16S rRNA + S-adenosyl-L-methionine = N(2)-methylguanosine(1207) in 16S rRNA + S-adenosyl-L-homocysteine + H(+). Specifically methylates the guanine in position 1207 of 16S rRNA in the 30S particle. This chain is Ribosomal RNA small subunit methyltransferase C, found in Actinobacillus pleuropneumoniae serotype 3 (strain JL03).